The primary structure comprises 467 residues: Acyl-lipid (8-3)-desaturase B (467 aa).

The Cytochrome b5 heme-binding domain maps to 12 to 89; the sequence is LKLYTWDEVS…IKQYEIGYIS (78 aa). Heme contacts are provided by His47 and His70. 2 consecutive transmembrane segments (helical) span residues 123–143 and 152–172; these read VSVG…VTYY and FWLN…FGLH. Positions 175–179 match the Histidine box-1 motif; sequence HDACH. A helical membrane pass occupies residues 187–207; sequence MTWKILGATFDLFAGASFYAW. A Histidine box-2 motif is present at residues 211-216; sequence HVIGHH. The next 2 membrane-spanning stretches (helical) occupy residues 293–313 and 317–337; these read AIFI…PLIY and FSHL…YLAI. Positions 400 to 404 match the Histidine box-3 motif; it reads QVIHH.

The protein belongs to the fatty acid desaturase type 1 family. It depends on Fe(2+) as a cofactor.

It localises to the membrane. The catalysed reaction is an (8Z,11Z,14Z)-icosatrienoyl-containing glycerolipid + 2 Fe(II)-[cytochrome b5] + O2 + 2 H(+) = (5Z,8Z,11Z,14Z)-eicosatetraenoyl-containing glycerolipid + 2 Fe(III)-[cytochrome b5] + 2 H2O. It catalyses the reaction an (8Z,11Z,14Z,17Z)-eicosatetraenoyl-containing glycerolipid + 2 Fe(II)-[cytochrome b5] + O2 + 2 H(+) = a (5Z,8Z,11Z,14Z,17Z)-eicosapentaenoyl-containing glycerolipid + 2 Fe(III)-[cytochrome b5] + 2 H2O. In terms of biological role, fatty acid desaturase that introduces a cis double bond at the 5-position in 18-carbon polyunsaturated fatty acids. The chain is Acyl-lipid (8-3)-desaturase B (fadB) from Dictyostelium discoideum (Social amoeba).